Here is a 219-residue protein sequence, read N- to C-terminus: Histone H1.01 (219 aa).

Composition is skewed to low complexity over residues 1–19 (MSET…GAKA) and 27–39 (AAGG…PAGP). Disordered stretches follow at residues 1-40 (MSET…AGPS) and 94-219 (LVQT…AKKK). Ser-2 carries the N-acetylserine modification. In terms of domain architecture, H15 spans 37–110 (AGPSVTELIT…GASGSFRLNK (74 aa)). 4 stretches are compositionally biased toward basic residues: residues 119-134 (APRK…KPAA), 142-159 (KKPK…KAKK), 167-185 (KAAK…KKAA), and 192-219 (KAVK…AKKK).

Belongs to the histone H1/H5 family.

It localises to the nucleus. Its subcellular location is the chromosome. Its function is as follows. Histones H1 are necessary for the condensation of nucleosome chains into higher-order structures. This chain is Histone H1.01, found in Gallus gallus (Chicken).